The primary structure comprises 295 residues: ATP synthase gamma chain (295 aa).

It belongs to the ATPase gamma chain family. F-type ATPases have 2 components, CF(1) - the catalytic core - and CF(0) - the membrane proton channel. CF(1) has five subunits: alpha(3), beta(3), gamma(1), delta(1), epsilon(1). CF(0) has three main subunits: a, b and c.

The protein resides in the cell inner membrane. Functionally, produces ATP from ADP in the presence of a proton gradient across the membrane. The gamma chain is believed to be important in regulating ATPase activity and the flow of protons through the CF(0) complex. The protein is ATP synthase gamma chain of Campylobacter fetus subsp. fetus (strain 82-40).